Consider the following 212-residue polypeptide: Eukaryotic translation initiation factor 4E-4 (212 aa).

A disulfide bridge connects residues Cys-143 and Cys-147.

This sequence belongs to the eukaryotic initiation factor 4E family. EIF4F is a multi-subunit complex, the composition of which varies with external and internal environmental conditions. It is composed of at least eIF4A, eIF4E and eIF4G. eIF4E is also known to interact with other partners. As to expression, enriched in somatic cells.

Its function is as follows. Recognizes and binds the 7-methylguanosine-containing mRNA cap during an early step in the initiation of protein synthesis and facilitates ribosome binding by inducing the unwinding of the mRNAs secondary structures. All 5 eIF4E proteins bind monomethyl cap structures. Only ife-1, ife-2 and ife-5 bind trimethyl cap structures which result from trans-splicing. Translation of trimethyl cap structure mRNAs may be regulated by intracellular redox state; disulfide bonds change the width and depth of the cap-binding cavity determining selectivity to mRNA caps. This chain is Eukaryotic translation initiation factor 4E-4 (ife-4), found in Caenorhabditis elegans.